A 342-amino-acid chain; its full sequence is UDP-N-acetylglucosamine--N-acetylmuramyl-(pentapeptide) pyrophosphoryl-undecaprenol N-acetylglucosamine transferase (342 aa).

UDP-N-acetyl-alpha-D-glucosamine contacts are provided by residues 10-12 (TGG), asparagine 124, serine 177, and glutamine 275.

This sequence belongs to the glycosyltransferase 28 family. MurG subfamily.

The protein localises to the cell inner membrane. It carries out the reaction di-trans,octa-cis-undecaprenyl diphospho-N-acetyl-alpha-D-muramoyl-L-alanyl-D-glutamyl-meso-2,6-diaminopimeloyl-D-alanyl-D-alanine + UDP-N-acetyl-alpha-D-glucosamine = di-trans,octa-cis-undecaprenyl diphospho-[N-acetyl-alpha-D-glucosaminyl-(1-&gt;4)]-N-acetyl-alpha-D-muramoyl-L-alanyl-D-glutamyl-meso-2,6-diaminopimeloyl-D-alanyl-D-alanine + UDP + H(+). Its pathway is cell wall biogenesis; peptidoglycan biosynthesis. In terms of biological role, cell wall formation. Catalyzes the transfer of a GlcNAc subunit on undecaprenyl-pyrophosphoryl-MurNAc-pentapeptide (lipid intermediate I) to form undecaprenyl-pyrophosphoryl-MurNAc-(pentapeptide)GlcNAc (lipid intermediate II). The chain is UDP-N-acetylglucosamine--N-acetylmuramyl-(pentapeptide) pyrophosphoryl-undecaprenol N-acetylglucosamine transferase from Campylobacter jejuni subsp. jejuni serotype O:2 (strain ATCC 700819 / NCTC 11168).